Here is a 244-residue protein sequence, read N- to C-terminus: Nicotinamidase 1 (244 aa).

The protein belongs to the isochorismatase family. As to expression, expressed in roots and stems, and at lower levels in flowers, siliques and leaves.

The catalysed reaction is nicotinamide + H2O = nicotinate + NH4(+). The protein operates within cofactor biosynthesis; nicotinate biosynthesis; nicotinate from nicotinamide: step 1/1. Functionally, catalyzes the deamidation of nicotinamide, an early step in the NAD(+) salvage pathway. Prevents the accumulation of intracellular nicotinamide, a known inhibitor of poly(ADP-ribose) polymerases (PARP enzymes). The protein is Nicotinamidase 1 of Arabidopsis thaliana (Mouse-ear cress).